Consider the following 562-residue polypeptide: MDKTLKLLILCLAWTCSFSALRCAARTYPPVATNQDQVIKFTTEGATSQSYKQFIEALRQRLTGGLIHDIPVLPDPTTVEERNRYITVELSNSERESIEVGIDVTNAYVVAYRAGSQSYFLRDAPASASTYLFPGTQRYSLRFDGSYGDLERWAHQTREEISLGLQALTHAISFLRSGASNDEEKARTLIVIIQMASEAARYRYISNRVGVSIRTGTAFQPDPAMLSLENNWDNLSGGVQQSVQDTFPNNVILSSINRQPVVVDSLSHPTVAVLALMLFVCNPPNANQSPLLIRSIVEESKICSSRYEPTVRIGGRDGMCVDVYDDGYHNGNRIIAWKCKDRLEENQLWTLKSDKTIRSNGKCLTTEGYAPGNYVMIYDCTSAVAEATYWEIWDNGTIINPKSALVLSAESSSMGGTLTVQTNEYLMRQGWRTGNNTSPFVTSISGYSDLCMQAQGSNVWLADCDNNKKEQQWALYTDGSIRSVQNTNNCLTSKDHKQGSPIVLMACSNGWASQRWLFKNDGSIYNLHDDMVMDVKRSDPSLKEIILHPYHGKPNQIWLTLF.

The N-terminal stretch at 1–34 (MDKTLKLLILCLAWTCSFSALRCAARTYPPVATN) is a signal peptide. At Gln-35 the chain carries Pyrrolidone carboxylic acid. The active site involves Glu-198. Asn-234 is a glycosylation site (N-linked (GlcNAc...) asparagine). Disulfide bonds link Cys-281–Cys-303, Cys-320–Cys-339, and Cys-363–Cys-380. The Ricin B-type lectin 1 domain maps to 307–434 (YEPTVRIGGR…YLMRQGWRTG (128 aa)). One copy of the 1-alpha repeat lies at 317-359 (DGMCVDVYDDGYHNGNRIIAWKCKDRLEENQLWTLKSDKTIRS). The stretch at 360 to 400 (NGKCLTTEGYAPGNYVMIYDCTSAVAEATYWEIWDNGTIIN) is one 1-beta repeat. 2 N-linked (GlcNAc...) asparagine glycosylation sites follow: Asn-395 and Asn-435. Residues 403–435 (SALVLSAESSSMGGTLTVQTNEYLMRQGWRTGN) form a 1-gamma repeat. Residues 437 to 561 (TSPFVTSISG…GKPNQIWLTL (125 aa)) form the Ricin B-type lectin 2 domain. The 2-alpha repeat unit spans residues 448 to 483 (SDLCMQAQGSNVWLADCDNNKKEQQWALYTDGSIRS). Cystine bridges form between Cys-451/Cys-464 and Cys-490/Cys-507. One copy of the 2-beta repeat lies at 487-526 (TNNCLTSKDHKQGSPIVLMACSNGWASQRWLFKNDGSIYN). A 2-gamma repeat occupies 529–562 (DDMVMDVKRSDPSLKEIILHPYHGKPNQIWLTLF).

This sequence in the N-terminal section; belongs to the ribosome-inactivating protein family. Type 2 RIP subfamily. Disulfide-linked dimer of A and B chains.

It carries out the reaction Endohydrolysis of the N-glycosidic bond at one specific adenosine on the 28S rRNA.. In terms of biological role, the A chain is responsible for inhibiting protein synthesis through the catalytic inactivation of 60S ribosomal subunits by removing adenine from position 4,324 of 28S rRNA. Abrin-a is more toxic than ricin. The B chain is a galactose-specific lectin that facilitates the binding of abrin to the cell membrane that precedes endocytosis. The polypeptide is Abrin-c (Abrus precatorius (Indian licorice)).